Reading from the N-terminus, the 518-residue chain is F-box protein At1g47056 (518 aa).

An F-box domain is found at 37–82 (PDYTSSLPDECLALVFQFLNSGNRKRCALVCRRWMIVEGQNRYRLS).

In Arabidopsis thaliana (Mouse-ear cress), this protein is F-box protein At1g47056.